The chain runs to 305 residues: Leucine-rich repeat-containing protein 25 (305 aa).

The signal sequence occupies residues Met1–Ser20. The Extracellular portion of the chain corresponds to Leu21–Thr165. 3 LRR repeats span residues Ser39 to Arg59, Asn62 to His83, and Lys86 to Arg107. Residues Asn44 and Asn55 are each glycosylated (N-linked (GlcNAc...) asparagine). Asn130 and Asn148 each carry an N-linked (GlcNAc...) asparagine glycan. Residues Ile166–Leu186 form a helical membrane-spanning segment. Residues Ala187–His305 lie on the Cytoplasmic side of the membrane. A disordered region spans residues Pro204–Pro229. Tyr284 is modified (phosphotyrosine).

As to quaternary structure, interacts with RIGI. Interacts with SQSTM1. Interacts with p65/RELA; this interaction promotes the degradation of RELA through autophagy. As to expression, expressed in plasmacytoid dendritic cells (PDC), monocyte-derived dendritic cells (MDDC), granulocytes, monocytes, B-lymphocytes, peripheral blood leukocytes, spleen, bone marrow, and, to a lesser extent, lymph nodes, fetal liver, and appendix but not in thymus.

The protein resides in the membrane. It is found in the cytoplasm. Functionally, plays a role in the inhibition of RLR-mediated type I interferon signaling pathway by targeting RIGI for autophagic degradation. Interacts specifically with ISG15-associated RIGI to promote interaction between RIGI and the autophagic cargo receptor p62/SQSTM1 to mediate RIGI degradation via selective autophagy. Also plays a role in the inhibition of NF-kappa-B signaling pathway and inflammatory response by promoting the degradation of p65/RELA. The protein is Leucine-rich repeat-containing protein 25 (LRRC25) of Homo sapiens (Human).